The chain runs to 99 residues: Large ribosomal subunit protein uL23 (99 aa).

This sequence belongs to the universal ribosomal protein uL23 family. Part of the 50S ribosomal subunit. Contacts protein L29, and trigger factor when it is bound to the ribosome.

Functionally, one of the early assembly proteins it binds 23S rRNA. One of the proteins that surrounds the polypeptide exit tunnel on the outside of the ribosome. Forms the main docking site for trigger factor binding to the ribosome. The polypeptide is Large ribosomal subunit protein uL23 (Stutzerimonas stutzeri (strain A1501) (Pseudomonas stutzeri)).